Consider the following 94-residue polypeptide: Pyrimidine/purine nucleoside phosphorylase (94 aa).

The protein belongs to the nucleoside phosphorylase PpnP family.

It carries out the reaction a purine D-ribonucleoside + phosphate = a purine nucleobase + alpha-D-ribose 1-phosphate. The catalysed reaction is adenosine + phosphate = alpha-D-ribose 1-phosphate + adenine. It catalyses the reaction cytidine + phosphate = cytosine + alpha-D-ribose 1-phosphate. The enzyme catalyses guanosine + phosphate = alpha-D-ribose 1-phosphate + guanine. It carries out the reaction inosine + phosphate = alpha-D-ribose 1-phosphate + hypoxanthine. The catalysed reaction is thymidine + phosphate = 2-deoxy-alpha-D-ribose 1-phosphate + thymine. It catalyses the reaction uridine + phosphate = alpha-D-ribose 1-phosphate + uracil. The enzyme catalyses xanthosine + phosphate = alpha-D-ribose 1-phosphate + xanthine. In terms of biological role, catalyzes the phosphorolysis of diverse nucleosides, yielding D-ribose 1-phosphate and the respective free bases. Can use uridine, adenosine, guanosine, cytidine, thymidine, inosine and xanthosine as substrates. Also catalyzes the reverse reactions. This Vibrio campbellii (strain ATCC BAA-1116) protein is Pyrimidine/purine nucleoside phosphorylase.